The following is a 498-amino-acid chain: ATP synthase subunit beta, chloroplastic (498 aa).

172–179 (GGAGVGKT) lines the ATP pocket.

This sequence belongs to the ATPase alpha/beta chains family. F-type ATPases have 2 components, CF(1) - the catalytic core - and CF(0) - the membrane proton channel. CF(1) has five subunits: alpha(3), beta(3), gamma(1), delta(1), epsilon(1). CF(0) has four main subunits: a(1), b(1), b'(1) and c(9-12).

The protein localises to the plastid. The protein resides in the chloroplast thylakoid membrane. The enzyme catalyses ATP + H2O + 4 H(+)(in) = ADP + phosphate + 5 H(+)(out). Its function is as follows. Produces ATP from ADP in the presence of a proton gradient across the membrane. The catalytic sites are hosted primarily by the beta subunits. This is ATP synthase subunit beta, chloroplastic from Schisandra sphenanthera (Southern magnolia vine).